We begin with the raw amino-acid sequence, 117 residues long: Glycine cleavage system H-like protein (117 aa).

Residues 21-103 (IVRLGLSSRM…ESEGWFVVLQ (83 aa)) enclose the Lipoyl-binding domain. Lys-62 bears the N6-lipoyllysine mark.

It belongs to the GcvH family. It depends on (R)-lipoate as a cofactor.

The protein is Glycine cleavage system H-like protein of Chlamydia muridarum (strain MoPn / Nigg).